Reading from the N-terminus, the 382-residue chain is uncharacterized protein (382 aa).

Residues M1–P7 are Cytoplasmic-facing. The chain crosses the membrane as a helical span at residues V8–L28. Over V29–G44 the chain is Periplasmic. A helical membrane pass occupies residues M45–I65. Residues K66–Y74 are Cytoplasmic-facing. The chain crosses the membrane as a helical span at residues Y75–W95. Residues S96–R101 are Periplasmic-facing. The chain crosses the membrane as a helical span at residues F102 to S122. Residues G123–R130 lie on the Cytoplasmic side of the membrane. A helical transmembrane segment spans residues L131–S151. Residues K152 to E156 are Periplasmic-facing. Residues L157–F177 form a helical membrane-spanning segment. Topologically, residues T178–R203 are cytoplasmic. The helical transmembrane segment at L204–P224 threads the bilayer. The Periplasmic segment spans residues L225–Q230. Residues G231–G251 traverse the membrane as a helical segment. The Cytoplasmic segment spans residues Q252–R269. 2 consecutive transmembrane segments (helical) span residues V270–P290 and A291–C311. Residues E312–Q324 are Cytoplasmic-facing. A helical membrane pass occupies residues A325–M345. Residues Q346–Y348 lie on the Periplasmic side of the membrane. The chain crosses the membrane as a helical span at residues S349–L369. Topologically, residues R370 to I382 are cytoplasmic.

Belongs to the major facilitator superfamily. YcaD (TC 2.A.1.26) family.

The protein localises to the cell inner membrane. This is an uncharacterized protein from Salmonella typhi.